The chain runs to 5251 residues: Dynein heavy chain-like protein 2 (5251 aa).

5 Kelch repeats span residues 37–87 (GLFL…CYHN), 95–143 (YVII…LQNG), 266–317 (SLIL…IHGN), 318–367 (NLFI…LVES), and 372–421 (IIFI…QNNE). Residues 140–188 (LQNGINGTNEKGYISQTDDENCSDNKYGENQDYGSNDSDSKDGEDIDKD) form a disordered region. A disordered region spans residues 686-732 (NNIEQRNNNNDNNDNNNNDNNNNNNNDNNNNNNNNNNNNNNNNDNLN). Over residues 692–730 (NNNNDNNDNNNNDNNNNNNNDNNNNNNNNNNNNNNNNDN) the composition is skewed to low complexity. Coiled-coil stretches lie at residues 1155–1225 (DNII…KKIK) and 1544–1610 (KLNN…KLIS). Residues 1554-1598 (EKNKNANENSNEIETNKYNKKEELTNNRDGDGDDDDNIKNDKDEK) form a disordered region. Positions 1567–1583 (ETNKYNKKEELTNNRDG) are enriched in basic and acidic residues. The stretch at 1639-1685 (HIKYTLKYYITNLFRLKDLFNNEKEKWIDENYLAQVFILCNTIFFVN) is one Kelch 6 repeat. The tract at residues 1802-1825 (HQEGKQEYNNKNNDNDNNNNNNNN) is disordered. The segment covering 1810–1825 (NNKNNDNDNNNNNNNN) has biased composition (low complexity). Residue 1895-1902 (GPAGTGKT) coordinates ATP. A coiled-coil region spans residues 2136–2188 (NDINENKKEKDNIEELKSDNVKEEKKTKKKHLEDNNNNKKKELFNLNNIEKEL). The segment at 2152–2171 (KSDNVKEEKKTKKKHLEDNN) is disordered. 2224–2231 (GEAGCGKT) serves as a coordination point for ATP. A Kelch 7 repeat occupies 2447–2494 (VIWCFGGFLGEKDNVNYKKSFDKYWKNTFKSIKVNRKISVFDFYVENN). Residues 2546–2553 (GKTGVGKT) and 2890–2897 (GIGGCGKT) contribute to the ATP site. 2 stretches are compositionally biased toward low complexity: residues 3138 to 3154 (DNNN…DGNN) and 3652 to 3671 (DQNF…NSTN). Disordered regions lie at residues 3138–3163 (DNNN…EGND), 3652–3686 (DQNF…NHNN), 4042–4250 (EDND…EENV), 4280–4299 (NGKI…DFEN), 4773–4824 (MDFH…ENEE), and 4910–4948 (KIIK…HSGS). Positions 4059–4086 (KMEDEEKMEEEKVDEEKMEEEKVDEEKM) are enriched in acidic residues. A compositionally biased stretch (basic and acidic residues) spans 4087–4247 (EDEKVEEKME…EKGEEQKAEE (161 aa)). 2 stretches are compositionally biased toward acidic residues: residues 4289–4299 (DDLEEEEDFEN) and 4807–4823 (DDDD…EENE). Basic and acidic residues predominate over residues 4912 to 4937 (IKKEKPGDNKDNKYTHDQKKETIHKE).

It belongs to the dynein heavy chain family. Consists of at least two heavy chains and a number of intermediate and light chains.

Its subcellular location is the cytoplasm. It is found in the cytoskeleton. Its function is as follows. Acts as a motor for the intracellular retrograde motility of vesicles and organelles along microtubules. Dynein has ATPase activity; the force-producing power stroke is thought to occur on release of ADP. This chain is Dynein heavy chain-like protein 2, found in Plasmodium falciparum (isolate 3D7).